Here is a 55-residue protein sequence, read N- to C-terminus: Large ribosomal subunit protein bL33 (55 aa).

The protein belongs to the bacterial ribosomal protein bL33 family.

In Granulibacter bethesdensis (strain ATCC BAA-1260 / CGDNIH1), this protein is Large ribosomal subunit protein bL33.